The primary structure comprises 503 residues: Probable DNA ligase (503 aa).

Asp-212 lines the ATP pocket. Lys-214 functions as the N6-AMP-lysine intermediate in the catalytic mechanism. Residues Arg-219, Arg-234, Glu-263, Phe-296, Arg-368, and Lys-374 each contribute to the ATP site.

The protein belongs to the ATP-dependent DNA ligase family. Requires Mg(2+) as cofactor.

The enzyme catalyses ATP + (deoxyribonucleotide)n-3'-hydroxyl + 5'-phospho-(deoxyribonucleotide)m = (deoxyribonucleotide)n+m + AMP + diphosphate.. In terms of biological role, DNA ligase that seals nicks in double-stranded DNA during DNA replication, DNA recombination and DNA repair. This Kineococcus radiotolerans (strain ATCC BAA-149 / DSM 14245 / SRS30216) protein is Probable DNA ligase.